Reading from the N-terminus, the 237-residue chain is Orotidine 5'-phosphate decarboxylase (237 aa).

Residues aspartate 11, lysine 34, 61–70 (DLKLHDIPNT), threonine 124, arginine 186, glutamine 195, glycine 215, and arginine 216 contribute to the substrate site. Lysine 63 (proton donor) is an active-site residue.

Belongs to the OMP decarboxylase family. Type 1 subfamily. In terms of assembly, homodimer.

It carries out the reaction orotidine 5'-phosphate + H(+) = UMP + CO2. Its pathway is pyrimidine metabolism; UMP biosynthesis via de novo pathway; UMP from orotate: step 2/2. In terms of biological role, catalyzes the decarboxylation of orotidine 5'-monophosphate (OMP) to uridine 5'-monophosphate (UMP). The chain is Orotidine 5'-phosphate decarboxylase from Lactococcus lactis subsp. cremoris (strain MG1363).